Consider the following 331-residue polypeptide: Autoinducer 2 import system permease protein LsrD (331 aa).

A run of 10 helical transmembrane segments spans residues 7–27 (YGWELALAALLVLEIGLFGLS), 45–65 (ICIGIVALPLTMVIVSGGIDI), 67–87 (FGSTIGLCSIFLGVMFQAGVP), 90–110 (IAIPLTLLVGALCGLINAGLI), 118–138 (LVITLGTMYLFGGSALLLSGI), 162–182 (LLGLPVPLVIFMVCVLLFWLL), 212–232 (TLCLLYALTGMASAIAAVLLV), 240–260 (SDLGASFLMPAITAVVLGGAN), 261–281 (IYGGSGSILGTALAVLLVGYL), and 288–308 (IGTPNQISSALSGALLILVVV).

This sequence belongs to the binding-protein-dependent transport system permease family. AraH/RbsC subfamily. The complex is composed of two ATP-binding proteins (LsrA), two transmembrane proteins (LsrC and LsrD) and a solute-binding protein (LsrB).

It localises to the cell inner membrane. Functionally, part of the ABC transporter complex LsrABCD involved in autoinducer 2 (AI-2) import. Probably responsible for the translocation of the substrate across the membrane. The protein is Autoinducer 2 import system permease protein LsrD (lsrD) of Yersinia enterocolitica serotype O:8 / biotype 1B (strain NCTC 13174 / 8081).